Here is a 358-residue protein sequence, read N- to C-terminus: Phosphoribosylformylglycinamidine cyclo-ligase (358 aa).

This sequence belongs to the AIR synthase family.

It localises to the cytoplasm. It carries out the reaction 2-formamido-N(1)-(5-O-phospho-beta-D-ribosyl)acetamidine + ATP = 5-amino-1-(5-phospho-beta-D-ribosyl)imidazole + ADP + phosphate + H(+). It functions in the pathway purine metabolism; IMP biosynthesis via de novo pathway; 5-amino-1-(5-phospho-D-ribosyl)imidazole from N(2)-formyl-N(1)-(5-phospho-D-ribosyl)glycinamide: step 2/2. The polypeptide is Phosphoribosylformylglycinamidine cyclo-ligase (Nitrosococcus oceani (strain ATCC 19707 / BCRC 17464 / JCM 30415 / NCIMB 11848 / C-107)).